Consider the following 144-residue polypeptide: Large ribosomal subunit protein uL14 (144 aa).

Belongs to the universal ribosomal protein uL14 family. Part of the 50S ribosomal subunit. Forms a cluster with proteins L3 and L24e, part of which may contact the 16S rRNA in 2 intersubunit bridges.

Binds to 23S rRNA. Forms part of two intersubunit bridges in the 70S ribosome. This is Large ribosomal subunit protein uL14 from Caldivirga maquilingensis (strain ATCC 700844 / DSM 13496 / JCM 10307 / IC-167).